Reading from the N-terminus, the 382-residue chain is D-galactonate dehydratase (382 aa).

D183 serves as a coordination point for Mg(2+). Residue H185 is the Proton donor of the active site. E209 and E235 together coordinate Mg(2+). Residue H285 is the Proton acceptor of the active site.

The protein belongs to the mandelate racemase/muconate lactonizing enzyme family. GalD subfamily. The cofactor is Mg(2+).

The catalysed reaction is D-galactonate = 2-dehydro-3-deoxy-D-galactonate + H2O. It participates in carbohydrate acid metabolism; D-galactonate degradation; D-glyceraldehyde 3-phosphate and pyruvate from D-galactonate: step 1/3. Its function is as follows. Catalyzes the dehydration of D-galactonate to 2-keto-3-deoxy-D-galactonate. The polypeptide is D-galactonate dehydratase (Pectobacterium atrosepticum (strain SCRI 1043 / ATCC BAA-672) (Erwinia carotovora subsp. atroseptica)).